The chain runs to 336 residues: Ornithine carbamoyltransferase (336 aa).

Carbamoyl phosphate contacts are provided by residues 56–59, Q83, R107, and 134–137; these read STRT and HPTQ. L-ornithine-binding positions include N168, D232, and 236-237; that span reads SM. Carbamoyl phosphate-binding positions include 274–275 and R320; that span reads CL.

The protein belongs to the aspartate/ornithine carbamoyltransferase superfamily. OTCase family.

Its subcellular location is the cytoplasm. The enzyme catalyses carbamoyl phosphate + L-ornithine = L-citrulline + phosphate + H(+). It participates in amino-acid biosynthesis; L-arginine biosynthesis; L-arginine from L-ornithine and carbamoyl phosphate: step 1/3. Reversibly catalyzes the transfer of the carbamoyl group from carbamoyl phosphate (CP) to the N(epsilon) atom of ornithine (ORN) to produce L-citrulline. The polypeptide is Ornithine carbamoyltransferase (Erwinia tasmaniensis (strain DSM 17950 / CFBP 7177 / CIP 109463 / NCPPB 4357 / Et1/99)).